The following is a 345-amino-acid chain: Anthranilate phosphoribosyltransferase (345 aa).

5-phospho-alpha-D-ribose 1-diphosphate is bound by residues Gly-84, 87–88 (GD), Thr-92, 94–97 (NIST), 112–120 (KHGGRSVSS), and Ser-124. Position 84 (Gly-84) interacts with anthranilate. Ser-96 is a binding site for Mg(2+). Arg-170 serves as a coordination point for anthranilate. Residues Asp-229 and Glu-230 each coordinate Mg(2+).

The protein belongs to the anthranilate phosphoribosyltransferase family. As to quaternary structure, homodimer. Mg(2+) is required as a cofactor.

The enzyme catalyses N-(5-phospho-beta-D-ribosyl)anthranilate + diphosphate = 5-phospho-alpha-D-ribose 1-diphosphate + anthranilate. It functions in the pathway amino-acid biosynthesis; L-tryptophan biosynthesis; L-tryptophan from chorismate: step 2/5. Functionally, catalyzes the transfer of the phosphoribosyl group of 5-phosphorylribose-1-pyrophosphate (PRPP) to anthranilate to yield N-(5'-phosphoribosyl)-anthranilate (PRA). The protein is Anthranilate phosphoribosyltransferase of Herminiimonas arsenicoxydans.